The chain runs to 62 residues: Putative antitoxin AF_1095 (62 aa).

Belongs to the UPF0165 family.

In terms of biological role, possibly the antitoxin component of a type II toxin-antitoxin (TA) system. The sequence is that of Putative antitoxin AF_1095 from Archaeoglobus fulgidus (strain ATCC 49558 / DSM 4304 / JCM 9628 / NBRC 100126 / VC-16).